The sequence spans 154 residues: Endoribonuclease YbeY (154 aa).

The Zn(2+) site is built by histidine 118, histidine 122, and histidine 128.

Belongs to the endoribonuclease YbeY family. It depends on Zn(2+) as a cofactor.

It is found in the cytoplasm. Its function is as follows. Single strand-specific metallo-endoribonuclease involved in late-stage 70S ribosome quality control and in maturation of the 3' terminus of the 16S rRNA. The protein is Endoribonuclease YbeY of Macrococcus caseolyticus (strain JCSC5402) (Macrococcoides caseolyticum).